The chain runs to 315 residues: Ribosomal RNA small subunit methyltransferase H (315 aa).

S-adenosyl-L-methionine contacts are provided by residues 35-37, Asp55, Phe80, Asp102, and Gln109; that span reads GGH.

The protein belongs to the methyltransferase superfamily. RsmH family.

It localises to the cytoplasm. It carries out the reaction cytidine(1402) in 16S rRNA + S-adenosyl-L-methionine = N(4)-methylcytidine(1402) in 16S rRNA + S-adenosyl-L-homocysteine + H(+). Specifically methylates the N4 position of cytidine in position 1402 (C1402) of 16S rRNA. The sequence is that of Ribosomal RNA small subunit methyltransferase H from Shewanella halifaxensis (strain HAW-EB4).